Consider the following 1224-residue polypeptide: Protein MSN5 (1224 aa).

Residues 1200–1224 (NKENGDMLDDPNIEDGAVGNLFDDN) are disordered.

Interacts with CEX1.

In Saccharomyces cerevisiae (strain ATCC 204508 / S288c) (Baker's yeast), this protein is Protein MSN5 (MSN5).